The sequence spans 4467 residues: Protocadherin-like protein (4467 aa).

The signal sequence occupies residues Met-1–Thr-22. 28 consecutive Cadherin domains span residues Ala-23–Phe-128, Pro-129–Phe-238, Glu-239–Phe-350, Gln-351–Phe-455, Asn-459–Phe-566, Ser-567–Phe-664, Lys-665–Phe-764, Ser-765–Phe-884, Ser-885–Phe-994, Glu-1092–Phe-1197, Ser-1290–Phe-1395, Ser-1396–Phe-1499, Gly-1495–Phe-1597, Ser-1601–Arg-1701, Thr-1793–Phe-1891, Ser-1892–Phe-1992, Glu-1993–Phe-2100, Leu-2101–Phe-2202, Thr-2203–Phe-2312, Leu-2313–Phe-2423, Pro-2425–Phe-2529, Lys-2530–Phe-2639, Pro-2640–Phe-2746, Asp-2747–Phe-2849, Pro-2850–Phe-2954, Asn-2955–Phe-3062, Val-3063–Phe-3170, and Arg-3173–Asp-3288. Topologically, residues Ala-23 to Ala-4258 are extracellular. The region spanning Pro-3551–Gln-3589 is the EGF-like 1 domain. Disulfide bonds link Cys-3555/Cys-3567, Cys-3561/Cys-3577, Cys-3579/Cys-3588, Cys-3762/Cys-3788, Cys-3794/Cys-3803, Cys-3797/Cys-3812, and Cys-3814/Cys-3823. The 199-residue stretch at Ser-3590–Cys-3788 folds into the Laminin G-like 1 domain. In terms of domain architecture, EGF-like 2 spans Leu-3790 to Asp-3824. The Laminin G-like 2 domain occupies Val-3842–Ser-4096. Residues Ile-4089–Val-4118 are disordered. Gly residues predominate over residues Ser-4096–Val-4118. Positions Pro-4206–Glu-4238 constitute an EGF-like 3 domain. 3 disulfide bridges follow: Cys-4207–Cys-4218, Cys-4212–Cys-4226, and Cys-4228–Cys-4237. Residues Val-4259–Leu-4279 traverse the membrane as a helical segment. The Cytoplasmic portion of the chain corresponds to Lys-4280–Glu-4467. The disordered stretch occupies residues Asp-4424–Glu-4445.

As to expression, component of the acid-insoluble organic matrix of the aragonitic skeleton (at protein level).

The protein localises to the membrane. This chain is Protocadherin-like protein, found in Acropora millepora (Staghorn coral).